We begin with the raw amino-acid sequence, 423 residues long: UDP-N-acetylglucosamine 1-carboxyvinyltransferase (423 aa).

Position 22-23 (22-23) interacts with phosphoenolpyruvate; it reads KN. Arg93 contacts UDP-N-acetyl-alpha-D-glucosamine. Residue Cys117 is the Proton donor of the active site. Cys117 carries the post-translational modification 2-(S-cysteinyl)pyruvic acid O-phosphothioketal. Residues 122 to 126, Asp308, and Ile330 contribute to the UDP-N-acetyl-alpha-D-glucosamine site; that span reads RPVDL.

Belongs to the EPSP synthase family. MurA subfamily.

It localises to the cytoplasm. It catalyses the reaction phosphoenolpyruvate + UDP-N-acetyl-alpha-D-glucosamine = UDP-N-acetyl-3-O-(1-carboxyvinyl)-alpha-D-glucosamine + phosphate. Its pathway is cell wall biogenesis; peptidoglycan biosynthesis. In terms of biological role, cell wall formation. Adds enolpyruvyl to UDP-N-acetylglucosamine. This is UDP-N-acetylglucosamine 1-carboxyvinyltransferase from Maricaulis maris (strain MCS10) (Caulobacter maris).